We begin with the raw amino-acid sequence, 405 residues long: Aspartokinase (405 aa).

ACT domains are found at residues 267–344 (VSME…AKVS) and 345–405 (IVGV…QLDQ).

It belongs to the aspartokinase family.

It catalyses the reaction L-aspartate + ATP = 4-phospho-L-aspartate + ADP. It functions in the pathway amino-acid biosynthesis; L-lysine biosynthesis via DAP pathway; (S)-tetrahydrodipicolinate from L-aspartate: step 1/4. The protein operates within amino-acid biosynthesis; L-methionine biosynthesis via de novo pathway; L-homoserine from L-aspartate: step 1/3. Its pathway is amino-acid biosynthesis; L-threonine biosynthesis; L-threonine from L-aspartate: step 1/5. The protein is Aspartokinase (lysC) of Helicobacter pylori (strain J99 / ATCC 700824) (Campylobacter pylori J99).